The chain runs to 743 residues: Coiled-coil domain-containing protein 30 (743 aa).

Basic and acidic residues-rich tracts occupy residues M1–Q22 and S133–E193. 4 disordered regions span residues M1–S25, E114–E193, S208–L233, and S695–S715. Coiled coils occupy residues K21 to H98 and R165 to S580. Over residues S208–G223 the composition is skewed to low complexity.

It belongs to the prefoldin subunit beta family.

This Macaca fascicularis (Crab-eating macaque) protein is Coiled-coil domain-containing protein 30 (CCDC30).